The chain runs to 436 residues: MAKKMKLSDITNMFAGMDVEALEGVTIEGDIEIDLGGLGGGFDPMLAAALGQESAVLAQHFARIAGMFGYPVGIGAPAAPAISPALAAPKLKDLIPAKFDVANIAEWATQIQEVPIGNTSADGGSRGKRVLVGGEKALPFFPDAPMPNRNQVTIDVFDMRIGLAKAVKENYDEVMDSPGEWAKKNVEKFNADMITIHLISTDPLVKDTPPKEAAKTVEEVLQAVDVPIAIGGSGNPQKDPEVLARAAEVAEGERCLLASASLNLDYAAIAEAALKYDHDVLSWTQLDMNAQKELNRKLMKQCNVPRDRIIMDPTTAALGYGLDYAYTNMERIRLAALMGDDELTFPMSSGTTNAWGARESWMVGSPLKEDSDWGPREYRGPIWEIVTGLSLAIAGNDLFMMMHPTSVAVLKQITQTLFGTIDTEQVDIANWIGAEV.

This sequence belongs to the CdhD family. As to quaternary structure, heterodimer of delta and gamma chains. The ACDS complex is made up of alpha, epsilon, beta, gamma and delta chains with a probable stoichiometry of (alpha(2)epsilon(2))(4)-beta(8)-(gamma(1)delta(1))(8).

It participates in one-carbon metabolism; methanogenesis from acetate. In terms of biological role, part of a complex that catalyzes the reversible cleavage of acetyl-CoA, allowing growth on acetate as sole source of carbon and energy. Probably maintains the overall quaternary structure of the ACDS complex. The sequence is that of Acetyl-CoA decarbonylase/synthase complex subunit delta from Methanosarcina mazei (strain ATCC BAA-159 / DSM 3647 / Goe1 / Go1 / JCM 11833 / OCM 88) (Methanosarcina frisia).